A 499-amino-acid polypeptide reads, in one-letter code: Membrane-associated tyrosine- and threonine-specific cdc2-inhibitory kinase (499 aa).

The residue at position 1 (methionine 1) is an N-acetylmethionine. The segment at 1-29 (MLERPPALAMPMPTEGTPPPLSGTPIPVP) is disordered. A compositionally biased stretch (pro residues) spans 16 to 28 (GTPPPLSGTPIPV). Residue threonine 17 is modified to Phosphothreonine. Residue serine 40 is modified to Phosphoserine. The interval 42–72 (KRPRGLSRSLPPPPPAKGSIPISRLFPPRTP) is disordered. Phosphoserine is present on residues serine 94 and serine 120. Positions 110 to 359 (FQRLSRLGHG…AEALLALPVL (250 aa)) constitute a Protein kinase domain. Residues 116-124 (LGHGSYGEV) and lysine 139 contribute to the ATP site. 2 positions are modified to phosphoserine: serine 143 and serine 160. The active-site Proton acceptor is aspartate 233. Mg(2+) contacts are provided by asparagine 238, aspartate 251, and glycine 253. A Membrane-association motif motif is present at residues 382 to 398 (LWQALLALLCWLWHGLA). An interaction with PIN1 region spans residues 398 to 499 (AHPASWLQPL…SLFEDTLDPT (102 aa)). Serine 426 is modified (phosphoserine; by PLK1). The tract at residues 437 to 499 (GPSLSPEAVL…SLFEDTLDPT (63 aa)) is interaction with CDC2-CCNB1. The interval 451 to 485 (GSTSTPRSRCTPRDALDLSDINSEPPRGSFPSFEP) is disordered. Residues serine 469, serine 473, and serine 482 each carry the phosphoserine modification. The residue at position 495 (threonine 495) is a Phosphothreonine; by PLK1.

This sequence belongs to the protein kinase superfamily. Ser/Thr protein kinase family. WEE1 subfamily. As to quaternary structure, interacts with CDC2-CCNB1 complex. Can also interact with PIN1 when phosphorylated by CDC2-CCNB1. Autophosphorylated. Phosphorylated by CDC2-CCNB1 complexes on undefined serine and threonine residues. The phosphorylation by CDC2-CCNB1 complexes may inhibit the catalytic activity.

It is found in the endoplasmic reticulum membrane. Its subcellular location is the golgi apparatus membrane. The enzyme catalyses L-seryl-[protein] + ATP = O-phospho-L-seryl-[protein] + ADP + H(+). It catalyses the reaction L-threonyl-[protein] + ATP = O-phospho-L-threonyl-[protein] + ADP + H(+). Its activity is regulated as follows. Negatively regulated by hyperphosphorylation during mitosis. The hyperphosphorylated form does not associate with CCNB1-CDC2 complexes. The PLK1 protein kinase may be required for mitotic phosphorylation. In terms of biological role, acts as a negative regulator of entry into mitosis (G2 to M transition) by phosphorylation of the CDK1 kinase specifically when CDK1 is complexed to cyclins. Mediates phosphorylation of CDK1 predominantly on 'Thr-14'. Also involved in Golgi fragmentation. May be involved in phosphorylation of CDK1 on 'Tyr-15' to a lesser degree, however tyrosine kinase activity is unclear and may be indirect. The chain is Membrane-associated tyrosine- and threonine-specific cdc2-inhibitory kinase (PKMYT1) from Homo sapiens (Human).